We begin with the raw amino-acid sequence, 349 residues long: UDP-N-acetylenolpyruvoylglucosamine reductase (349 aa).

Positions 25–197 (GIDARARYAA…VSVTFRLPKR (173 aa)) constitute an FAD-binding PCMH-type domain. Residue R173 is part of the active site. Catalysis depends on S249, which acts as the Proton donor. The active site involves E345.

It belongs to the MurB family. FAD is required as a cofactor.

It is found in the cytoplasm. The catalysed reaction is UDP-N-acetyl-alpha-D-muramate + NADP(+) = UDP-N-acetyl-3-O-(1-carboxyvinyl)-alpha-D-glucosamine + NADPH + H(+). The protein operates within cell wall biogenesis; peptidoglycan biosynthesis. Cell wall formation. This chain is UDP-N-acetylenolpyruvoylglucosamine reductase, found in Burkholderia multivorans (strain ATCC 17616 / 249).